We begin with the raw amino-acid sequence, 122 residues long: Large ribosomal subunit protein uL14 (122 aa).

The protein belongs to the universal ribosomal protein uL14 family. As to quaternary structure, part of the 50S ribosomal subunit. Forms a cluster with proteins L3 and L19. In the 70S ribosome, L14 and L19 interact and together make contacts with the 16S rRNA in bridges B5 and B8.

Binds to 23S rRNA. Forms part of two intersubunit bridges in the 70S ribosome. In Mycobacterium marinum (strain ATCC BAA-535 / M), this protein is Large ribosomal subunit protein uL14.